The sequence spans 498 residues: uncharacterized protein (498 aa).

Residues 1–26 form the signal peptide; that stretch reads MEESSMAQASLICLLLSFSIIMLSNA. The Extracellular portion of the chain corresponds to 27 to 441; the sequence is ADISIDCGSS…GEEKSSSNLA (415 aa). Asparagine 44, asparagine 150, asparagine 354, and asparagine 357 each carry an N-linked (GlcNAc...) asparagine glycan. A disordered region spans residues 351-439; the sequence is GSGNGTNSTS…KSGEEKSSSN (89 aa). Positions 362-414 are enriched in gly residues; that stretch reads SGGGSPSPGGGSGSPPSTGGGSGSPPSTGGGGGSPSKGGGGGKSGGSNNGDGG. The segment covering 418 to 436 has biased composition (basic and acidic residues); the sequence is ASEDEKSADSSGKSGEEKS. The helical transmembrane segment at 442–462 threads the bilayer; sequence LPLGISLPTLLSLGAGGWGVW. At 463–498 the chain is on the cytoplasmic side; sequence KYFIKPRRHPESELPLKQNISLQVNMGNATVVNAGQ.

The protein resides in the membrane. This is an uncharacterized protein from Arabidopsis thaliana (Mouse-ear cress).